The chain runs to 229 residues: Ribose-5-phosphate isomerase A (229 aa).

Residues 28–31, 85–88, and 98–101 each bind substrate; these read TGST, DGAD, and KGRG. Glu107 acts as the Proton acceptor in catalysis. Lys125 contributes to the substrate binding site.

Belongs to the ribose 5-phosphate isomerase family. As to quaternary structure, homodimer.

It catalyses the reaction aldehydo-D-ribose 5-phosphate = D-ribulose 5-phosphate. The protein operates within carbohydrate degradation; pentose phosphate pathway; D-ribose 5-phosphate from D-ribulose 5-phosphate (non-oxidative stage): step 1/1. Its function is as follows. Catalyzes the reversible conversion of ribose-5-phosphate to ribulose 5-phosphate. The polypeptide is Ribose-5-phosphate isomerase A (Thermococcus kodakarensis (strain ATCC BAA-918 / JCM 12380 / KOD1) (Pyrococcus kodakaraensis (strain KOD1))).